Consider the following 688-residue polypeptide: Glycine--tRNA ligase beta subunit (688 aa).

Belongs to the class-II aminoacyl-tRNA synthetase family. As to quaternary structure, tetramer of two alpha and two beta subunits.

Its subcellular location is the cytoplasm. It catalyses the reaction tRNA(Gly) + glycine + ATP = glycyl-tRNA(Gly) + AMP + diphosphate. This chain is Glycine--tRNA ligase beta subunit, found in Actinobacillus pleuropneumoniae serotype 7 (strain AP76).